The following is a 372-amino-acid chain: L-selectin (372 aa).

The signal sequence occupies residues 1-28; sequence MIFPRKCQSTQRDLWNIFKLWGWTMLCC. The propeptide occupies 29–38; sequence DFLAHHGTDC. Topologically, residues 39-332 are extracellular; that stretch reads WTYHYSENPM…FSMIKEGDYN (294 aa). One can recognise a C-type lectin domain in the interval 55 to 155; it reads RFCRENYTDL…ACHKPKAALC (101 aa). 10 disulfide bridges follow: Cys57–Cys155, Cys128–Cys147, Cys128–Cys160, Cys160–Cys171, Cys165–Cys180, Cys182–Cys191, Cys197–Cys241, Cys227–Cys254, Cys259–Cys303, and Cys289–Cys316. Residues Asn60 and Asn104 are each glycosylated (N-linked (GlcNAc...) asparagine). Residues Glu118, Asn120, Glu126, Asn143, and Asp144 each contribute to the Ca(2+) site. One can recognise an EGF-like domain in the interval 156–192; that stretch reads YTASCQPWSCSGHGECVEIINNYTCNCDVGYYGPQCQ. Asn177 carries N-linked (GlcNAc...) asparagine glycosylation. Sushi domains are found at residues 195–256 and 257–318; these read IQCE…TCQV and IQCE…ICQK. Asn226, Asn232, Asn246, and Asn271 each carry an N-linked (GlcNAc...) asparagine glycan. The helical transmembrane segment at 333 to 355 threads the bilayer; that stretch reads PLFIPVAVMVTAFSGLAFIIWLA. The Cytoplasmic segment spans residues 356 to 372; it reads RRLKKGKKSKKSMDDPY.

The protein belongs to the selectin/LECAM family. Interaction with SELPLG/PSGL1 and PODXL2 is required for promoting recruitment and rolling of leukocytes. This interaction is dependent on the sialyl Lewis X glycan modification of SELPLG and PODXL2, and tyrosine sulfation modifications of SELPLG. Sulfation on 'Tyr-51' of SELPLG is important for L-selectin binding. N-glycosylated.

It localises to the cell membrane. In terms of biological role, calcium-dependent lectin that mediates cell adhesion by binding to glycoproteins on neighboring cells. Mediates the adherence of lymphocytes to endothelial cells of high endothelial venules in peripheral lymph nodes. Promotes initial tethering and rolling of leukocytes in endothelia. The protein is L-selectin (SELL) of Macaca mulatta (Rhesus macaque).